A 213-amino-acid chain; its full sequence is Cytochrome b6 (213 aa).

A helical membrane pass occupies residues 30-50 (IFYCLGGLTLLCFIIQCLTGV). Cysteine 33 lines the heme c pocket. Heme b-binding residues include histidine 84 and histidine 98. The next 3 helical transmembrane spans lie at 88–108 (CQLMILLVFLHMLRVYYTGAF), 114–134 (LNWVAGCFLLVLSLGLAFTGY), and 184–204 (LHVMILPAITIGFLVAHFIMI). Positions 185 and 200 each coordinate heme b.

Belongs to the cytochrome b family. PetB subfamily. As to quaternary structure, the subunits of the cytochrome bc complex are a Rieske Fe-S protein (PetC), cytochrome b6 (PetB), subunit IV (PetD), and a diheme cytochrome c (PetX). The cofactor is heme b. Requires heme c as cofactor.

The protein localises to the cell membrane. Its function is as follows. Component of the cytochrome bc complex which donates electrons to the photosynthetic reaction center. This chain is Cytochrome b6, found in Heliobacterium modesticaldum (strain ATCC 51547 / Ice1).